A 170-amino-acid polypeptide reads, in one-letter code: Large ribosomal subunit protein uL10 (170 aa).

This sequence belongs to the universal ribosomal protein uL10 family. In terms of assembly, part of the ribosomal stalk of the 50S ribosomal subunit. The N-terminus interacts with L11 and the large rRNA to form the base of the stalk. The C-terminus forms an elongated spine to which L12 dimers bind in a sequential fashion forming a multimeric L10(L12)X complex.

In terms of biological role, forms part of the ribosomal stalk, playing a central role in the interaction of the ribosome with GTP-bound translation factors. The polypeptide is Large ribosomal subunit protein uL10 (rplJ) (Chlamydia pneumoniae (Chlamydophila pneumoniae)).